Reading from the N-terminus, the 311-residue chain is Glycine-betaine-binding protein (311 aa).

A signal peptide spans 1-23 (MNRLIRSLCLACAGLFAAGLAQA).

It belongs to the OsmX family.

It is found in the periplasm. Functionally, binds glycine-betaine. The protein is Glycine-betaine-binding protein of Pseudomonas aeruginosa (strain ATCC 15692 / DSM 22644 / CIP 104116 / JCM 14847 / LMG 12228 / 1C / PRS 101 / PAO1).